The sequence spans 134 residues: Transcription antitermination protein NusB (134 aa).

Belongs to the NusB family.

Its function is as follows. Involved in transcription antitermination. Required for transcription of ribosomal RNA (rRNA) genes. Binds specifically to the boxA antiterminator sequence of the ribosomal RNA (rrn) operons. The sequence is that of Transcription antitermination protein NusB from Shewanella sediminis (strain HAW-EB3).